Here is a 327-residue protein sequence, read N- to C-terminus: 4-diphosphocytidyl-2-C-methyl-D-erythritol kinase (327 aa).

The active site involves lysine 14. Residue 97-107 participates in ATP binding; it reads PDGAGLGGGSA. The active site involves aspartate 140.

It belongs to the GHMP kinase family. IspE subfamily.

It carries out the reaction 4-CDP-2-C-methyl-D-erythritol + ATP = 4-CDP-2-C-methyl-D-erythritol 2-phosphate + ADP + H(+). Its pathway is isoprenoid biosynthesis; isopentenyl diphosphate biosynthesis via DXP pathway; isopentenyl diphosphate from 1-deoxy-D-xylulose 5-phosphate: step 3/6. In terms of biological role, catalyzes the phosphorylation of the position 2 hydroxy group of 4-diphosphocytidyl-2C-methyl-D-erythritol. This is 4-diphosphocytidyl-2-C-methyl-D-erythritol kinase from Oleidesulfovibrio alaskensis (strain ATCC BAA-1058 / DSM 17464 / G20) (Desulfovibrio alaskensis).